A 311-amino-acid polypeptide reads, in one-letter code: Transcription initiation factor IIB (311 aa).

The segment at 11–42 adopts a TFIIB-type zinc-finger fold; that stretch reads KETKCPECGSTKLINDHERGEVVCGACGLVID. C15, C18, C34, and C37 together coordinate Zn(2+). 2 tandem repeats follow at residues 128 to 211 and 222 to 303.

Belongs to the TFIIB family.

Its function is as follows. Stabilizes TBP binding to an archaeal box-A promoter. Also responsible for recruiting RNA polymerase II to the pre-initiation complex (DNA-TBP-TFIIB). This Methanosphaera stadtmanae (strain ATCC 43021 / DSM 3091 / JCM 11832 / MCB-3) protein is Transcription initiation factor IIB.